Consider the following 206-residue polypeptide: MANNTRARRTARLSRALGIALTPKAAKYMERRPYGPGEHGRARKKQDSDYAVRLREKQRLRAQYGIREAQMTRAFEEARRTKGLTGENLVELLEMRLDALVLRAGFARTIAQARQLVVHRHIMVDGIRVDRPSFRVGEGQLIHVHSRSEVMPPFQVAAAGAHVLNNVPAYLDVKIDALQARLVRRPKRSEVPVICEEQLVVEFYAR.

The tract at residues 28–48 (YMERRPYGPGEHGRARKKQDS) is disordered. Residues 95–160 (MRLDALVLRA…MPPFQVAAAG (66 aa)) form the S4 RNA-binding domain.

Belongs to the universal ribosomal protein uS4 family. Part of the 30S ribosomal subunit. Contacts protein S5. The interaction surface between S4 and S5 is involved in control of translational fidelity.

Its function is as follows. One of the primary rRNA binding proteins, it binds directly to 16S rRNA where it nucleates assembly of the body of the 30S subunit. In terms of biological role, with S5 and S12 plays an important role in translational accuracy. The chain is Small ribosomal subunit protein uS4 from Paenarthrobacter aurescens (strain TC1).